The following is a 365-amino-acid chain: MEVKEALFMNRGEGESSYAQNSSFTQKVASMTMPVLENAVETLFSKDFHLFQALNAADLGCATSPNTFTVISTIKRMMEKKCRELNCQTLELQVYLNDLPGNDFNTLFKGLLSKVVVGNKCEEVSCYVMGVPGSFHGRLFPRNSLHLVHSCYSAHWLSQAPKGLTSREGLPLNKGKIYISKRSPPVVREAYLSQFHDDFTMFLNARSQEVVPHGCMVLILPSRQSSDPSSMESCFTWELLAIAIAELVSQGLIDEDKLDTFNVPSYFPSLEEVKDIVERDGSFTIDHMEGFELDTLQMQENDKWIRGEKLAKAVRAFTEPIISNQFGHEIMDKLYDKFTHIVASDLEGKIPKSTSIVLVLSKIVG.

Residue Tyr18 coordinates S-adenosyl-L-homocysteine. Position 25 (Thr25) interacts with caffeine. S-adenosyl-L-homocysteine is bound by residues Cys61, Asn66, Asp98, Leu99, Ser134, and Phe135. Positions 152, 155, and 156 each coordinate caffeine. 4 residues coordinate Mg(2+): Asn173, Asp259, Phe261, and Asn262. Phe317 serves as a coordination point for caffeine.

Belongs to the methyltransferase superfamily. Type-7 methyltransferase family. It depends on Mg(2+) as a cofactor.

The protein operates within alkaloid biosynthesis. In terms of biological role, may be involved in the biosynthesis of caffeine. This Camellia sinensis (Tea plant) protein is Probable caffeine synthase 4.